A 160-amino-acid chain; its full sequence is Cyanate hydratase (160 aa).

Residues Arg100, Glu103, and Ser126 contribute to the active site.

It belongs to the cyanase family.

It carries out the reaction cyanate + hydrogencarbonate + 3 H(+) = NH4(+) + 2 CO2. Its function is as follows. Catalyzes the reaction of cyanate with bicarbonate to produce ammonia and carbon dioxide. This Emericella nidulans (strain FGSC A4 / ATCC 38163 / CBS 112.46 / NRRL 194 / M139) (Aspergillus nidulans) protein is Cyanate hydratase.